The sequence spans 161 residues: Anaerobic nitrite reductase Glb1-1 (161 aa).

Residues 8-157 (CFTEEQEALV…LVGAIKSEMK (150 aa)) enclose the Globin domain. Positions 41–45 (EIAPS) match the Homodimerization motif. Heme b-binding residues include serine 51, lysine 65, histidine 69, lysine 99, threonine 103, and histidine 104. A Homodimerization motif is present at residues 111–123 (NEHFEVTKFALLD).

This sequence belongs to the plant globin family. In terms of assembly, homodimer. Heme b serves as cofactor. As to expression, mainly expressed in root nodules, and, to a lower extent, in leaves, roots, stems, flowers and fruits. Accumulates in mature root nodules.

The catalysed reaction is Fe(III)-heme b-[protein] + nitric oxide + H2O = Fe(II)-heme b-[protein] + nitrite + 2 H(+). In terms of biological role, phytoglobin that reduces nitrite to nitric oxide (NO) under anoxic conditions (e.g. during flooding or in waterlogged soil) and upon root nodulation. Required for general plant development and during nodulation, especially for the onset of symbiosis. Monitors nitric oxide (NO) levels during early phase of the nitrogen-fixing symbiosis and buffers oxygen in functioning nodules. May not function as an oxygen storage or transport protein. Has an unusually high affinity for O(2) through a hexacoordinate heme iron because of a very low dissociation constant. This chain is Anaerobic nitrite reductase Glb1-1, found in Lotus japonicus (Lotus corniculatus var. japonicus).